The following is a 473-amino-acid chain: UDP-N-acetylmuramate--L-alanine ligase (473 aa).

Gly-123 to Ser-129 serves as a coordination point for ATP.

It belongs to the MurCDEF family.

It localises to the cytoplasm. The catalysed reaction is UDP-N-acetyl-alpha-D-muramate + L-alanine + ATP = UDP-N-acetyl-alpha-D-muramoyl-L-alanine + ADP + phosphate + H(+). It participates in cell wall biogenesis; peptidoglycan biosynthesis. Its function is as follows. Cell wall formation. This Prochlorococcus marinus subsp. pastoris (strain CCMP1986 / NIES-2087 / MED4) protein is UDP-N-acetylmuramate--L-alanine ligase.